The following is a 241-amino-acid chain: Urease accessory protein UreF (241 aa).

Belongs to the UreF family. As to quaternary structure, ureD, UreF and UreG form a complex that acts as a GTP-hydrolysis-dependent molecular chaperone, activating the urease apoprotein by helping to assemble the nickel containing metallocenter of UreC. The UreE protein probably delivers the nickel.

Its subcellular location is the cytoplasm. Required for maturation of urease via the functional incorporation of the urease nickel metallocenter. The protein is Urease accessory protein UreF of Rhodopseudomonas palustris (strain BisB18).